Here is a 104-residue protein sequence, read N- to C-terminus: MERQNIRIRLKAFDHRVLDNSTREIVSTAKRTGANVRGPIPLPTRIEKFTVLRSPHIDKKSREQFEIRTHKRLLDIVDPTPQTVDALMKLDLSAGVDVEIKLGA.

The protein belongs to the universal ribosomal protein uS10 family. Part of the 30S ribosomal subunit.

In terms of biological role, involved in the binding of tRNA to the ribosomes. The polypeptide is Small ribosomal subunit protein uS10 (Maricaulis maris (strain MCS10) (Caulobacter maris)).